A 237-amino-acid chain; its full sequence is Ribosomal RNA small subunit methyltransferase G (237 aa).

S-adenosyl-L-methionine is bound by residues Gly78, Phe83, 129–130 (AE), and Arg146.

It belongs to the methyltransferase superfamily. RNA methyltransferase RsmG family.

The protein localises to the cytoplasm. Its function is as follows. Specifically methylates the N7 position of a guanine in 16S rRNA. In Mesoplasma florum (strain ATCC 33453 / NBRC 100688 / NCTC 11704 / L1) (Acholeplasma florum), this protein is Ribosomal RNA small subunit methyltransferase G.